The chain runs to 480 residues: Thiamine biosynthesis bifunctional protein ThiM/ThiE (480 aa).

The tract at residues 1 to 287 (MSTLPERVRE…LYVLVSGATP (287 aa)) is hydroxyethylthiazole kinase. Met40 is a binding site for 5-(2-hydroxyethyl)-4-methylthiazole. The ATP site is built by Arg116 and Thr164. Gly191 provides a ligand contact to 5-(2-hydroxyethyl)-4-methylthiazole. Positions 288 to 480 (PDVLEAVLQA…VRRAKGEVSA (193 aa)) are thiamine-phosphate synthase. 4-amino-2-methyl-5-(diphosphooxymethyl)pyrimidine is bound by residues 303–307 (QFREK) and Asn335. Residues Asp336 and Asp355 each coordinate Mg(2+). Thr374 contacts 4-amino-2-methyl-5-(diphosphooxymethyl)pyrimidine. Position 400-402 (400-402 (TPS)) interacts with 2-[(2R,5Z)-2-carboxy-4-methylthiazol-5(2H)-ylidene]ethyl phosphate. 4-amino-2-methyl-5-(diphosphooxymethyl)pyrimidine is bound at residue Lys403. 2-[(2R,5Z)-2-carboxy-4-methylthiazol-5(2H)-ylidene]ethyl phosphate contacts are provided by residues Gly431 and 451-452 (IS).

In the N-terminal section; belongs to the Thz kinase family. The protein in the C-terminal section; belongs to the thiamine-phosphate synthase family. The cofactor is Mg(2+).

The enzyme catalyses 5-(2-hydroxyethyl)-4-methylthiazole + ATP = 4-methyl-5-(2-phosphooxyethyl)-thiazole + ADP + H(+). It carries out the reaction 2-[(2R,5Z)-2-carboxy-4-methylthiazol-5(2H)-ylidene]ethyl phosphate + 4-amino-2-methyl-5-(diphosphooxymethyl)pyrimidine + 2 H(+) = thiamine phosphate + CO2 + diphosphate. The catalysed reaction is 2-(2-carboxy-4-methylthiazol-5-yl)ethyl phosphate + 4-amino-2-methyl-5-(diphosphooxymethyl)pyrimidine + 2 H(+) = thiamine phosphate + CO2 + diphosphate. It catalyses the reaction 4-methyl-5-(2-phosphooxyethyl)-thiazole + 4-amino-2-methyl-5-(diphosphooxymethyl)pyrimidine + H(+) = thiamine phosphate + diphosphate. The protein operates within cofactor biosynthesis; thiamine diphosphate biosynthesis; 4-methyl-5-(2-phosphoethyl)-thiazole from 5-(2-hydroxyethyl)-4-methylthiazole: step 1/1. Its pathway is cofactor biosynthesis; thiamine diphosphate biosynthesis; thiamine phosphate from 4-amino-2-methyl-5-diphosphomethylpyrimidine and 4-methyl-5-(2-phosphoethyl)-thiazole: step 1/1. Its function is as follows. Condenses 4-methyl-5-(beta-hydroxyethyl)thiazole monophosphate (THZ-P) and 2-methyl-4-amino-5-hydroxymethyl pyrimidine pyrophosphate (HMP-PP) to form thiamine monophosphate (TMP). The protein is Thiamine biosynthesis bifunctional protein ThiM/ThiE (thiM/thiE) of Symbiobacterium thermophilum (strain DSM 24528 / JCM 14929 / IAM 14863 / T).